Consider the following 190-residue polypeptide: Putative hydrolase YdeN (190 aa).

Residues S71, D137, and H164 each act as charge relay system in the active site.

It belongs to the RBBP9 family.

This is Putative hydrolase YdeN (ydeN) from Bacillus subtilis (strain 168).